The sequence spans 182 residues: Lipoprotein signal peptidase (182 aa).

3 helical membrane-spanning segments follow: residues 12-32 (VAVF…TKAW), 68-88 (ATWV…VAGV), and 91-111 (VSMK…GNLI). Active-site residues include D127 and D140. Residues 135-155 (VGNVADIYLVVAGVVLVILIL) traverse the membrane as a helical segment.

Belongs to the peptidase A8 family.

The protein resides in the cell membrane. It catalyses the reaction Release of signal peptides from bacterial membrane prolipoproteins. Hydrolyzes -Xaa-Yaa-Zaa-|-(S,diacylglyceryl)Cys-, in which Xaa is hydrophobic (preferably Leu), and Yaa (Ala or Ser) and Zaa (Gly or Ala) have small, neutral side chains.. It functions in the pathway protein modification; lipoprotein biosynthesis (signal peptide cleavage). In terms of biological role, this protein specifically catalyzes the removal of signal peptides from prolipoproteins. The polypeptide is Lipoprotein signal peptidase (Bifidobacterium longum (strain DJO10A)).